A 68-amino-acid polypeptide reads, in one-letter code: DNA gyrase inhibitor YacG (68 aa).

Residues C10, C13, C29, and C33 each contribute to the Zn(2+) site. The interval 45 to 68 is disordered; it reads EKRIPSDTELSDSDEWSEEDPLKH. Residues 53–68 show a composition bias toward acidic residues; it reads ELSDSDEWSEEDPLKH.

This sequence belongs to the DNA gyrase inhibitor YacG family. As to quaternary structure, interacts with GyrB. Requires Zn(2+) as cofactor.

Inhibits all the catalytic activities of DNA gyrase by preventing its interaction with DNA. Acts by binding directly to the C-terminal domain of GyrB, which probably disrupts DNA binding by the gyrase. This Yersinia pseudotuberculosis serotype O:1b (strain IP 31758) protein is DNA gyrase inhibitor YacG.